Here is a 449-residue protein sequence, read N- to C-terminus: MFKTLTQNLTKIFDKLVNSGILTENQIDTAMRDVRVALLESDVALPVIKGFIEEVKQKALGQEVIKSVSPGQMIIKIIHEEMINLLASTESTTKLNLNAKPPVNLLIVGLQGGGKTTASGKLALRLKNQNKKVLLVSLDTYRPAAQEQLAIIANSVNIDSLPIVKGEKPLDIVKRAIGEAQISAYDVVIYDTAGRIQIDNVMMEEALAIKKILNPTETLLVIDSMTGQDAVITAKTFSEKLEISGLILSRIDGDTKGGAALSVKYFTQKPIKFLSSGEKLTDLEEFNAERLASRILDMGDIISFVKKAASIVDREEAEKTAIKLKSGKFDLNDYLQQMRSIKKMGGFGSILSMLPGSGKIFDQIDQSKLNSKIIEHQEAIILSMTLKERKNPDIINASRRKRIAAGAGMTVQKVNILLKQYKQISAVMKKTSKMNPKNLLRSGIGKLFS.

GTP-binding positions include 109–116 (GLQGGGKT), 191–195 (DTAGR), and 249–252 (SRID).

It belongs to the GTP-binding SRP family. SRP54 subfamily. In terms of assembly, part of the signal recognition particle protein translocation system, which is composed of SRP and FtsY. SRP is a ribonucleoprotein composed of Ffh and a 4.5S RNA molecule.

The protein resides in the cytoplasm. It carries out the reaction GTP + H2O = GDP + phosphate + H(+). Functionally, involved in targeting and insertion of nascent membrane proteins into the cytoplasmic membrane. Binds to the hydrophobic signal sequence of the ribosome-nascent chain (RNC) as it emerges from the ribosomes. The SRP-RNC complex is then targeted to the cytoplasmic membrane where it interacts with the SRP receptor FtsY. Interaction with FtsY leads to the transfer of the RNC complex to the Sec translocase for insertion into the membrane, the hydrolysis of GTP by both Ffh and FtsY, and the dissociation of the SRP-FtsY complex into the individual components. This chain is Signal recognition particle protein, found in Rickettsia prowazekii (strain Madrid E).